We begin with the raw amino-acid sequence, 848 residues long: Probable disease resistance protein At5g43730 (848 aa).

Residues 25 to 62 (SNYIHLMESNLDALQKTMEELKNGRDDLLARVSIEEDK) adopt a coiled-coil conformation. Residues 137-439 (VAQKIIPKAE…CEGYINPNRY (303 aa)) enclose the NB-ARC domain. 179–186 (GMGGIGKT) lines the ATP pocket. LRR repeat units follow at residues 534 to 555 (NLSTLLLPYNKLVDISVGFFLF), 558 to 580 (KLVVLDLSTNWSLIELPEEISNL), 582 to 604 (SLQYLNLSLTGIKSLPVGLKKLR), 605 to 627 (KLIYLNLEFTNVLESLVGIATTL), and 629 to 649 (NLQVLKLFYSLFCVDDIIMEE).

Belongs to the disease resistance NB-LRR family.

Its function is as follows. Probable disease resistance protein. In Arabidopsis thaliana (Mouse-ear cress), this protein is Probable disease resistance protein At5g43730.